The sequence spans 663 residues: 4-hydroxy-3-methylbut-2-en-1-yl diphosphate synthase (flavodoxin) (663 aa).

Residues Cys-568, Cys-571, Cys-602, and Glu-609 each coordinate [4Fe-4S] cluster.

Belongs to the IspG family. [4Fe-4S] cluster serves as cofactor.

The enzyme catalyses (2E)-4-hydroxy-3-methylbut-2-enyl diphosphate + oxidized [flavodoxin] + H2O + 2 H(+) = 2-C-methyl-D-erythritol 2,4-cyclic diphosphate + reduced [flavodoxin]. It participates in isoprenoid biosynthesis; isopentenyl diphosphate biosynthesis via DXP pathway; isopentenyl diphosphate from 1-deoxy-D-xylulose 5-phosphate: step 5/6. In terms of biological role, converts 2C-methyl-D-erythritol 2,4-cyclodiphosphate (ME-2,4cPP) into 1-hydroxy-2-methyl-2-(E)-butenyl 4-diphosphate. The sequence is that of 4-hydroxy-3-methylbut-2-en-1-yl diphosphate synthase (flavodoxin) from Leptospira borgpetersenii serovar Hardjo-bovis (strain L550).